A 503-amino-acid chain; its full sequence is Glycoprotein 3-alpha-L-fucosyltransferase A (503 aa).

At 1 to 10 the chain is on the cytoplasmic side; it reads MRRPKISLKK. A helical; Signal-anchor for type II membrane protein membrane pass occupies residues 11–28; it reads YFYLTLICALLLIFGFSL. At 29–503 the chain is on the lumenal side; that stretch reads KEREIWKTLS…KDVISDSSDD (475 aa). The interval 44-71 is disordered; sequence ITTQQQQHQHLHQLQSMDEEHPMATSST. Residues 47–58 are compositionally biased toward low complexity; it reads QQQQHQHLHQLQ. Asparagine 262, asparagine 295, and asparagine 299 each carry an N-linked (GlcNAc...) asparagine glycan.

The protein belongs to the glycosyltransferase 10 family. The cofactor is Mn(2+).

The protein resides in the golgi apparatus. It localises to the golgi stack membrane. It catalyses the reaction N(4)-{beta-D-GlcNAc-(1-&gt;2)-alpha-D-Man-(1-&gt;3)-[beta-D-GlcNAc-(1-&gt;2)-alpha-D-Man-(1-&gt;6)]-beta-D-Man-(1-&gt;4)-beta-D-GlcNAc-(1-&gt;4)-beta-D-GlcNAc}-L-asparaginyl-[protein] + GDP-beta-L-fucose = N(4)-{beta-D-GlcNAc-(1-&gt;2)-alpha-D-Man-(1-&gt;3)-[beta-D-GlcNAc-(1-&gt;2)-alpha-D-Man-(1-&gt;6)]-beta-D-Man-(1-&gt;4)-beta-D-GlcNAc-(1-&gt;4)-[alpha-L-Fuc(1-&gt;3)]-beta-D-GlcNAc}-L-asparaginyl-[protein] + GDP + H(+). Its pathway is protein modification; protein glycosylation. In terms of biological role, catalyzes alpha-1,3 glycosidic linkages of N-glycans. Plays a role in neuronal development by promoting ventral nerve cord formation, possibly by promoting interactions between migrating cells and the extracellular matrix or by promoting neural activity. This is Glycoprotein 3-alpha-L-fucosyltransferase A (FucTA) from Drosophila melanogaster (Fruit fly).